A 480-amino-acid chain; its full sequence is Acyl-lipid (8-3)-desaturase (480 aa).

Positions 1-30 (MAPHSADTAGLVPSDELRLRTSNSKGPEQE) are disordered. A Cytochrome b5 heme-binding domain is found at 33-107 (LKKYTLEDVS…LAKYCIGELV (75 aa)). The heme site is built by histidine 68 and histidine 90. The next 2 membrane-spanning stretches (helical) occupy residues 151–171 (IHPHMILKSLFILGGYFASYY) and 173–193 (AFFWSSSVLVSLFFALWMGFF). The Histidine box-1 signature appears at 203 to 207 (HDGNH). A Histidine box-2 motif is present at residues 238-243 (HVVGHH). The next 3 membrane-spanning stretches (helical) occupy residues 280-300 (IYLAVLYGTLALKSIFLDDFL), 322-342 (IFFQGKLLYAFYMFVLPSVYG), and 348-368 (TFLALYVASQLITGWMLAFLF). Positions 419 to 423 (QIEHH) match the Histidine box-3 motif.

The protein belongs to the fatty acid desaturase type 1 family. Fe(2+) serves as cofactor.

It localises to the membrane. It catalyses the reaction an (8Z,11Z,14Z)-icosatrienoyl-containing glycerolipid + 2 Fe(II)-[cytochrome b5] + O2 + 2 H(+) = (5Z,8Z,11Z,14Z)-eicosatetraenoyl-containing glycerolipid + 2 Fe(III)-[cytochrome b5] + 2 H2O. The catalysed reaction is an (8Z,11Z,14Z,17Z)-eicosatetraenoyl-containing glycerolipid + 2 Fe(II)-[cytochrome b5] + O2 + 2 H(+) = a (5Z,8Z,11Z,14Z,17Z)-eicosapentaenoyl-containing glycerolipid + 2 Fe(III)-[cytochrome b5] + 2 H2O. Its function is as follows. Fatty acid desaturase that introduces a cis double bond at the 5-position in 20-carbon polyunsaturated fatty acids incorporated in a glycerolipid that contain a Delta(8) double bond. In Physcomitrium patens (Spreading-leaved earth moss), this protein is Acyl-lipid (8-3)-desaturase.